Here is a 101-residue protein sequence, read N- to C-terminus: NADH-quinone oxidoreductase subunit K (101 aa).

A run of 3 helical transmembrane segments spans residues 4–24, 30–50, and 65–85; these read LEHY…GLFL, IVLL…LVAF, and FVLT…VCFF.

This sequence belongs to the complex I subunit 4L family. As to quaternary structure, NDH-1 is composed of 14 different subunits. Subunits NuoA, H, J, K, L, M, N constitute the membrane sector of the complex.

Its subcellular location is the cell inner membrane. The catalysed reaction is a quinone + NADH + 5 H(+)(in) = a quinol + NAD(+) + 4 H(+)(out). NDH-1 shuttles electrons from NADH, via FMN and iron-sulfur (Fe-S) centers, to quinones in the respiratory chain. The immediate electron acceptor for the enzyme in this species is believed to be ubiquinone. Couples the redox reaction to proton translocation (for every two electrons transferred, four hydrogen ions are translocated across the cytoplasmic membrane), and thus conserves the redox energy in a proton gradient. The chain is NADH-quinone oxidoreductase subunit K from Ruegeria pomeroyi (strain ATCC 700808 / DSM 15171 / DSS-3) (Silicibacter pomeroyi).